The following is a 284-amino-acid chain: Transmembrane protein 163b (284 aa).

The segment at Met1 to Ala44 is disordered. Over Met1 to Ala83 the chain is Cytoplasmic. A helical transmembrane segment spans residues Leu84–Val104. Topologically, residues Ser105–Ala111 are extracellular. A helical transmembrane segment spans residues Ser112–Trp132. The Cytoplasmic segment spans residues Arg133 to Arg145. Residues Glu146 to Val166 traverse the membrane as a helical segment. Residues Lys167 to Asp182 are Extracellular-facing. A helical membrane pass occupies residues Phe183–Phe203. Over Met204–Arg212 the chain is Cytoplasmic. The chain crosses the membrane as a helical span at residues Ala213–Ile233. Over Ser234–Ser243 the chain is Extracellular. A helical membrane pass occupies residues Val244–Val264. Residues Lys265–Glu284 are Cytoplasmic-facing.

The protein belongs to the TMEM163 family.

The protein localises to the cytoplasmic vesicle. It localises to the secretory vesicle. It is found in the synaptic vesicle membrane. The protein resides in the early endosome membrane. Its subcellular location is the late endosome membrane. The protein localises to the lysosome membrane. It localises to the cell membrane. The enzyme catalyses Zn(2+)(in) = Zn(2+)(out). Its function is as follows. Zinc ion transporter that mediates zinc efflux and plays a crucial role in intracellular zinc homeostasis. Binds the divalent cations Zn(2+), Ni(2+), and to a minor extent Cu(2+). Is a functional modulator of P2X purinoceptors, including P2RX1, P2RX3, P2RX4 and P2RX7. Plays a role in central nervous system development and is required for myelination, and survival and proliferation of oligodendrocytes. The protein is Transmembrane protein 163b of Danio rerio (Zebrafish).